Consider the following 371-residue polypeptide: Cathepsin W (371 aa).

An N-terminal signal peptide occupies residues 1–21; sequence MTLTAHLSYFLVLLLAGQGLS. Residues 22–125 constitute a propeptide that is removed on maturation; it reads DSLLTKDAGP…KVESNTWGES (104 aa). N-linked (GlcNAc...) asparagine glycans are attached at residues N48 and N112. Intrachain disulfides connect C148-C189, C182-C224, and C282-C347. C151 is a catalytic residue. N-linked (GlcNAc...) asparagine glycosylation is present at N203. Catalysis depends on residues H289 and N326. A glycan (N-linked (GlcNAc...) asparagine) is linked at N344.

It belongs to the peptidase C1 family.

Its subcellular location is the endoplasmic reticulum. Functionally, may have a specific function in the mechanism or regulation of T-cell cytolytic activity. This is Cathepsin W (Ctsw) from Mus musculus (Mouse).